We begin with the raw amino-acid sequence, 394 residues long: Elongation factor Tu 1 (394 aa).

In terms of domain architecture, tr-type G spans 10-204; it reads KPHVNVGTIG…ALDNYIPEPE (195 aa). The G1 stretch occupies residues 19–26; sequence GHVDHGKT. 19–26 is a binding site for GTP; the sequence is GHVDHGKT. Residue Thr26 participates in Mg(2+) binding. A G2 region spans residues 60–64; the sequence is GITIS. The tract at residues 81–84 is G3; the sequence is DCPG. GTP-binding positions include 81 to 85 and 136 to 139; these read DCPGH and NKCD. A G4 region spans residues 136–139; that stretch reads NKCD. Positions 174–176 are G5; sequence SAL.

The protein belongs to the TRAFAC class translation factor GTPase superfamily. Classic translation factor GTPase family. EF-Tu/EF-1A subfamily. In terms of assembly, monomer.

It localises to the cytoplasm. The enzyme catalyses GTP + H2O = GDP + phosphate + H(+). Its function is as follows. GTP hydrolase that promotes the GTP-dependent binding of aminoacyl-tRNA to the A-site of ribosomes during protein biosynthesis. This is Elongation factor Tu 1 from Photobacterium profundum (strain SS9).